The chain runs to 93 residues: UPF0358 protein BH2626 (93 aa).

This sequence belongs to the UPF0358 family.

This is UPF0358 protein BH2626 from Halalkalibacterium halodurans (strain ATCC BAA-125 / DSM 18197 / FERM 7344 / JCM 9153 / C-125) (Bacillus halodurans).